Here is a 952-residue protein sequence, read N- to C-terminus: Lysosomal alpha-glucosidase (952 aa).

The signal sequence occupies residues 1–27 (MRVRHPPCSRRLLAICALVSLATAALL). A propeptide spanning residues 28–69 (GHILLHDFLLVPRELSGSSPVLEETHPAHQQGASRPGPRDAQ) is cleaved from the precursor. The tract at residues 47-80 (PVLEETHPAHQQGASRPGPRDAQAHLGRPRAVPT) is disordered. One can recognise a P-type domain in the interval 80–131 (TQCDVPPNSRFDCAPDKAITREQCDARGCCYIPAKQGLRGAQMGQPWCFFPP). Intrachain disulfides connect Cys82-Cys109, Cys92-Cys108, and Cys103-Cys127. N-linked (GlcNAc...) asparagine glycans are attached at residues Asn140, Asn233, and Asn390. Asp404 lines the substrate pocket. N-linked (GlcNAc...) asparagine glycosylation is present at Asn470. The active-site Nucleophile is the Asp518. Residue Glu521 is part of the active site. Cys533 and Cys558 are disulfide-bonded. Substrate-binding residues include Arg600 and Asp616. Cys647 and Cys658 are oxidised to a cystine. N-linked (GlcNAc...) asparagine glycosylation is present at Asn652. Residue His674 participates in substrate binding. N-linked (GlcNAc...) asparagine glycosylation is found at Asn882 and Asn925.

Belongs to the glycosyl hydrolase 31 family.

Its subcellular location is the lysosome. It is found in the lysosome membrane. It catalyses the reaction Hydrolysis of terminal, non-reducing (1-&gt;4)-linked alpha-D-glucose residues with release of alpha-D-glucose.. In terms of biological role, essential for the degradation of glycogen in lysosomes. Has highest activity on alpha-1,4-linked glycosidic linkages, but can also hydrolyze alpha-1,6-linked glucans. This chain is Lysosomal alpha-glucosidase (GAA), found in Pongo abelii (Sumatran orangutan).